Here is a 291-residue protein sequence, read N- to C-terminus: N-acetylmannosamine kinase (291 aa).

Residues 5 to 12 (AIDIGGTK) and 132 to 139 (GVGGGVVS) each bind ATP. The Zn(2+) site is built by H156, C166, C168, and C173.

This sequence belongs to the ROK (NagC/XylR) family. NanK subfamily. In terms of assembly, homodimer.

It catalyses the reaction an N-acyl-D-mannosamine + ATP = an N-acyl-D-mannosamine 6-phosphate + ADP + H(+). The protein operates within amino-sugar metabolism; N-acetylneuraminate degradation; D-fructose 6-phosphate from N-acetylneuraminate: step 2/5. Functionally, catalyzes the phosphorylation of N-acetylmannosamine (ManNAc) to ManNAc-6-P. The protein is N-acetylmannosamine kinase of Escherichia coli (strain 55989 / EAEC).